Reading from the N-terminus, the 368-residue chain is Protein PXR1 (368 aa).

The tract at residues 1 to 24 is disordered; sequence MGLAGAKNKRKLGNDPNNTKWSRN. Residues 15–24 show a composition bias toward polar residues; that stretch reads DPNNTKWSRN. One can recognise a G-patch domain in the interval 25–79; it reads TDTFGQKILRAQGWQPGEYLGAKDAAHAEWHTEANTTHIRVTLKDDTLGLGAKRN. Positions 144–337 are disordered; sequence TPDEEAEEIP…GYSTPIPTGS (194 aa). Residues 176-186 show a composition bias toward basic and acidic residues; that stretch reads RRSDKEDDKLG. Basic residues-rich tracts occupy residues 187–196 and 257–277; these read KKEKKSKKRK and DKKR…KKEK. Low complexity predominate over residues 310 to 337; that stretch reads PSSAPTPTDSNSSTPTGSGYSTPIPTGS.

The protein belongs to the PINX1 family.

Its subcellular location is the nucleus. The protein localises to the nucleolus. In terms of biological role, involved in rRNA-processing at A0, A1 and A2 sites and negatively regulates telomerase. This is Protein PXR1 (PXR1) from Chaetomium globosum (strain ATCC 6205 / CBS 148.51 / DSM 1962 / NBRC 6347 / NRRL 1970) (Soil fungus).